The primary structure comprises 564 residues: Malignant brain tumor repeat protein 1 (564 aa).

MBT repeat units follow at residues 64–176 (FTWS…MKWL), 205–327 (RPTE…TKAT), 331–442 (LEHS…LDRL), and 450–549 (FKWE…LRHP).

Interacts with histone H3 that is trimethylated at 'Lys-9' (H3K9me3).

The chain is Malignant brain tumor repeat protein 1 (mbtr-1) from Caenorhabditis elegans.